The following is a 352-amino-acid chain: Protein Wnt-2 (352 aa).

An N-terminal signal peptide occupies residues 1–23 (MWKIHNKLLIYILWIMEIRLVSS). 11 disulfide bridges follow: C65-C76, C115-C123, C125-C148, C196-C210, C198-C205, C281-C312, C297-C307, C311-C351, C327-C342, C329-C339, and C334-C335. Residues N75 and N119 are each glycosylated (N-linked (GlcNAc...) asparagine). S202 is lipidated: O-palmitoleoyl serine; by PORCN.

Belongs to the Wnt family. In terms of processing, palmitoleoylated by porcupine. The lipid group functions as a sorting signal, targeting the ligand to polarized vesicles that transport Wnt2 to unique sites at the cell surface. Depalmitoleoylated by notum, leading to inhibit Wnt signaling pathway. As to expression, dynamic expression pattern during embryogenesis. Expression is predominantly segmented, with expression also seen in the limb primordia and presumptive gonads. In embryonic tracheal cells, expression is close to and dorsal to the tracheal placode.

It localises to the secreted. It is found in the extracellular space. The protein resides in the extracellular matrix. Functionally, binds as a ligand to a family of frizzled seven-transmembrane receptors and acts through a cascade of genes on the nucleus. Segment polarity protein. May function in gonadogenesis and limb development. Wg and Wnt2 have a role in the developing trachea and together are responsible for all dorsal trunk formation. This chain is Protein Wnt-2 (Wnt2), found in Drosophila melanogaster (Fruit fly).